The primary structure comprises 141 residues: Large ribosomal subunit protein uL16 (141 aa).

This sequence belongs to the universal ribosomal protein uL16 family. Part of the 50S ribosomal subunit.

Its function is as follows. Binds 23S rRNA and is also seen to make contacts with the A and possibly P site tRNAs. The polypeptide is Large ribosomal subunit protein uL16 (Campylobacter fetus subsp. fetus (strain 82-40)).